The chain runs to 302 residues: Putative S-adenosyl-L-methionine-dependent methyltransferase MUL_2961 (302 aa).

S-adenosyl-L-methionine is bound by residues Asp128 and 157 to 158 (DL).

It belongs to the UPF0677 family.

Its function is as follows. Exhibits S-adenosyl-L-methionine-dependent methyltransferase activity. This chain is Putative S-adenosyl-L-methionine-dependent methyltransferase MUL_2961, found in Mycobacterium ulcerans (strain Agy99).